The following is a 112-amino-acid chain: UPF0102 protein NIS_1551 (112 aa).

This sequence belongs to the UPF0102 family.

This is UPF0102 protein NIS_1551 from Nitratiruptor sp. (strain SB155-2).